The sequence spans 243 residues: Large ribosomal subunit protein uL3 (243 aa).

2 disordered regions span residues 139 to 164 and 218 to 243; these read VSHR…KMPG and KPGK…QEGV. Gln151 carries the post-translational modification N5-methylglutamine. Residues 231–243 are compositionally biased toward low complexity; sequence QTAAAPAAEQEGV.

The protein belongs to the universal ribosomal protein uL3 family. Part of the 50S ribosomal subunit. Forms a cluster with proteins L14 and L19. Methylated by PrmB.

In terms of biological role, one of the primary rRNA binding proteins, it binds directly near the 3'-end of the 23S rRNA, where it nucleates assembly of the 50S subunit. This chain is Large ribosomal subunit protein uL3, found in Rhodopseudomonas palustris (strain BisB18).